The sequence spans 389 residues: Alkanesulfonate monooxygenase (389 aa).

This sequence belongs to the SsuD family.

It catalyses the reaction an alkanesulfonate + FMNH2 + O2 = an aldehyde + FMN + sulfite + H2O + 2 H(+). Its function is as follows. Catalyzes the desulfonation of aliphatic sulfonates. This is Alkanesulfonate monooxygenase from Agrobacterium fabrum (strain C58 / ATCC 33970) (Agrobacterium tumefaciens (strain C58)).